Here is a 397-residue protein sequence, read N- to C-terminus: Protein PEP-RELATED DEVELOPMENT ARRESTED 1, chloroplastic (397 aa).

A chloroplast-targeting transit peptide spans 1-52 (MLQSIHLRFSSTPSPSKRESLIIPSVICSFPFTSSSFRPKQTQKLKRLVQFC). Residues 315-334 (KDEGADNLSKEDDSSTEGRK) show a composition bias toward basic and acidic residues. The interval 315-351 (KDEGADNLSKEDDSSTEGRKPSGLNGRGSVTGRKPLP) is disordered.

Interacts with FSD2 and MRL7. As to expression, highly expressed in young leaves, shoots and flowers. Expressed at low levels in stems and siliques.

It is found in the plastid. Its subcellular location is the chloroplast stroma. It localises to the chloroplast nucleoid. Plays an essential role in early steps of chloroplast development. May be involved in the redox control of plastid gene expression by maintening the redox state around chloroplast nucleoids. May positively regulate plastid-encoded RNA polymerase (PEP) activity, through binding to FSD2. The polypeptide is Protein PEP-RELATED DEVELOPMENT ARRESTED 1, chloroplastic (PRDA1) (Arabidopsis thaliana (Mouse-ear cress)).